Reading from the N-terminus, the 467-residue chain is ATP synthase subunit beta (467 aa).

150–157 (GGAGVGKT) lines the ATP pocket.

The protein belongs to the ATPase alpha/beta chains family. As to quaternary structure, F-type ATPases have 2 components, CF(1) - the catalytic core - and CF(0) - the membrane proton channel. CF(1) has five subunits: alpha(3), beta(3), gamma(1), delta(1), epsilon(1). CF(0) has three main subunits: a(1), b(2) and c(9-12). The alpha and beta chains form an alternating ring which encloses part of the gamma chain. CF(1) is attached to CF(0) by a central stalk formed by the gamma and epsilon chains, while a peripheral stalk is formed by the delta and b chains.

Its subcellular location is the cell inner membrane. It carries out the reaction ATP + H2O + 4 H(+)(in) = ADP + phosphate + 5 H(+)(out). Its function is as follows. Produces ATP from ADP in the presence of a proton gradient across the membrane. The catalytic sites are hosted primarily by the beta subunits. In Aliivibrio salmonicida (strain LFI1238) (Vibrio salmonicida (strain LFI1238)), this protein is ATP synthase subunit beta.